A 159-amino-acid chain; its full sequence is U1 small nuclear ribonucleoprotein C (159 aa).

The Matrin-type zinc-finger motif lies at 4–36 (FYCDYCDTYLTHDSPSVRKTHCSGRKHKENVKD). The disordered stretch occupies residues 61–99 (KIPPTPFPGAPPPGGSLLPHPSIGGPPRPGMLPAPPMGG). Composition is skewed to pro residues over residues 63–74 (PPTPFPGAPPPG) and 84–99 (GGPPRPGMLPAPPMGG).

The protein belongs to the U1 small nuclear ribonucleoprotein C family. As to quaternary structure, component of the U1 snRNP. The U1 snRNP is composed of the U1 snRNA and the 7 core Sm proteins snrpb, snrpd1, snrpd2, snrpd3, snrpe, snrpf and snrpg that assemble in a heptameric protein ring on the Sm site of the small nuclear RNA to form the core snRNP, and at least 3 U1 snRNP-specific proteins snrnp70/U1-70K, snrpa/U1-A and snrpc/U1-C. snrpc/U1-C interacts with U1 snRNA and the 5' splice-site region of the pre-mRNA.

The protein resides in the nucleus. Functionally, component of the spliceosomal U1 snRNP, which is essential for recognition of the pre-mRNA 5' splice-site and the subsequent assembly of the spliceosome. snrpc/U1-C is directly involved in initial 5' splice-site recognition for both constitutive and regulated alternative splicing. The interaction with the 5' splice-site seems to precede base-pairing between the pre-mRNA and the U1 snRNA. Stimulates commitment or early (E) complex formation by stabilizing the base pairing of the 5' end of the U1 snRNA and the 5' splice-site region. The chain is U1 small nuclear ribonucleoprotein C from Danio rerio (Zebrafish).